A 100-amino-acid polypeptide reads, in one-letter code: Apolipoprotein C-II (100 aa).

Residues 1-22 (MSSQFLLAFFLVLLVLGYEVQG) form the signal peptide. Positions 66-74 (SVDEKLRDM) are lipid binding. A lipoprotein lipase cofactor region spans residues 78–100 (SSAAMSTYAGIFTDQLFTLLKGE).

This sequence belongs to the apolipoprotein C2 family. Proapolipoprotein C-II is synthesized as a sialic acid containing glycoprotein which is subsequently desialylated prior to its proteolytic processing. In terms of processing, proapolipoprotein C-II, the major form found in plasma undergoes proteolytic cleavage of its N-terminal hexapeptide to generate the mature form apolipoprotein C-II, which occurs as the minor form in plasma.

It is found in the secreted. Functionally, component of chylomicrons, very low-density lipoproteins (VLDL), low-density lipoproteins (LDL), and high-density lipoproteins (HDL) in plasma. Plays an important role in lipoprotein metabolism as an activator of lipoprotein lipase. This chain is Apolipoprotein C-II (APOC2), found in Cricetulus griseus (Chinese hamster).